Here is a 429-residue protein sequence, read N- to C-terminus: Enolase (429 aa).

Glutamine 167 is a binding site for (2R)-2-phosphoglycerate. Glutamate 209 (proton donor) is an active-site residue. Positions 246, 289, and 316 each coordinate Mg(2+). (2R)-2-phosphoglycerate-binding residues include lysine 341, arginine 370, serine 371, and lysine 392. Catalysis depends on lysine 341, which acts as the Proton acceptor.

Belongs to the enolase family. Component of the RNA degradosome, a multiprotein complex involved in RNA processing and mRNA degradation. Mg(2+) is required as a cofactor.

It localises to the cytoplasm. Its subcellular location is the secreted. It is found in the cell surface. It carries out the reaction (2R)-2-phosphoglycerate = phosphoenolpyruvate + H2O. Its pathway is carbohydrate degradation; glycolysis; pyruvate from D-glyceraldehyde 3-phosphate: step 4/5. Its function is as follows. Catalyzes the reversible conversion of 2-phosphoglycerate (2-PG) into phosphoenolpyruvate (PEP). It is essential for the degradation of carbohydrates via glycolysis. The chain is Enolase from Pseudomonas fluorescens (strain ATCC BAA-477 / NRRL B-23932 / Pf-5).